The primary structure comprises 408 residues: MKPARLLLLLSGCALLLAPAVRCCGPGRVVGSRRRPPRKLIPLAYKQFSPNVPEKTLGASGRYEGKIARNSERFKELTPNYNPDIIFKDEENTGADRLMTQRCKDRLNSLAISVMNQWPGVKLRVTEGWDEDGHHSEESLHYEGRAVDITTSDRDRNKYGMLARLAVEAGFDWVYYESKAHIHCSVKSEHSAAAKTGGCFPGRALATLENGARTPLWALRPGQRVLAMDGAGRPTYSDFLAFLDKEPRALTAFHVIETRQPPRRLALTPTHLLFVADNASAPAAQFRPTFASHVQPGHFVLVAVGSGGLQPAEVVGVRGRTDVGAYAPLTRHGTLVVDDVVASCFALVREQQLAQMAFWPLRLYHSLLGGPGVQGDGVHWYSGLLYRLGRMLLPPDSFHPLGAPRAES.

The signal sequence occupies residues 1 to 23 (MKPARLLLLLSGCALLLAPAVRC). Cys-24 carries the N-palmitoyl cysteine lipid modification. Ca(2+)-binding residues include Glu-90, Glu-91, Asp-96, Thr-126, Glu-127, Asp-130, and Asp-132. The Zn(2+) site is built by His-141, Asp-148, and His-183. Gly-198 carries the Cholesterol glycine ester lipid modification.

This sequence belongs to the hedgehog family. Multimer. As to quaternary structure, interacts with BOC and CDON. Interacts with PTCH1. Interacts with glypican GPC3. In terms of processing, cholesterylation is required for N-product targeting to lipid rafts and multimerization. Post-translationally, the C-terminal domain displays an autoproteolysis activity and a cholesterol transferase activity. Both activities result in the cleavage of the full-length protein and covalent attachment of a cholesterol moiety to the C-terminal of the newly generated N-product. The N-product is the active species in both local and long-range signaling, whereas the C-product is degraded in the endoplasmic reticulum. N-palmitoylation by HHAT of N-product is required for indian hedgehog protein N-product multimerization and full activity. As to expression, expressed in developing midgut, lung and cartilage of developing long bones in the limb.

Its subcellular location is the cell membrane. The protein resides in the endoplasmic reticulum membrane. It localises to the golgi apparatus membrane. The protein localises to the secreted. The catalysed reaction is glycyl-L-cysteinyl-[protein] + cholesterol + H(+) = [protein]-C-terminal glycyl cholesterol ester + N-terminal L-cysteinyl-[protein]. Plays a role in embryonic morphogenesis; it is involved in the regulation of endochondral skeleton formation, and the development of retinal pigment epithelium (RPE), photoreceptors and periocular tissues. In terms of biological role, the C-terminal part of the indian hedgehog protein precursor displays an autoproteolysis and a cholesterol transferase activity. Both activities result in the cleavage of the full-length protein into two parts followed by the covalent attachment of a cholesterol moiety to the C-terminal of the newly generated N-product. Both activities occur in the endoplasmic reticulum. Functionally, the dually lipidated indian hedgehog protein N-product is a morphogen which is essential for a variety of patterning events during development. Binds to the patched (PTCH1) receptor, which functions in association with smoothened (SMO), to activate the transcription of target genes. Plays a role in morphogenesis of the skeleton by coordinating growth and differentiation of the endochondral skeleton. Positively regulates PTHLH expression during endochondral bone formation preventing chondrocyte hypertrophy. In contrast, participates in normal chondrocyte proliferation in a PTHLH-independent pathway. The chain is Indian hedgehog protein from Gallus gallus (Chicken).